Here is a 31-residue protein sequence, read N- to C-terminus: Cytochrome b6-f complex subunit 6 (31 aa).

A helical membrane pass occupies residues 4 to 26 (ITSYFGFLLAASTITPALLIGLN).

This sequence belongs to the PetL family. As to quaternary structure, the 4 large subunits of the cytochrome b6-f complex are cytochrome b6, subunit IV (17 kDa polypeptide, PetD), cytochrome f and the Rieske protein, while the 4 small subunits are PetG, PetL, PetM and PetN. The complex functions as a dimer.

The protein resides in the plastid. The protein localises to the chloroplast thylakoid membrane. In terms of biological role, component of the cytochrome b6-f complex, which mediates electron transfer between photosystem II (PSII) and photosystem I (PSI), cyclic electron flow around PSI, and state transitions. PetL is important for photoautotrophic growth as well as for electron transfer efficiency and stability of the cytochrome b6-f complex. This is Cytochrome b6-f complex subunit 6 from Calycanthus floridus var. glaucus (Eastern sweetshrub).